Reading from the N-terminus, the 1931-residue chain is Chitin synthase 5 (1931 aa).

The region spanning 11-777 (LGVTDLSSLA…LFRFLEDRLR (767 aa)) is the Myosin motor domain. 122–129 (GPTGSGKS) is a binding site for ATP. 3 N-linked (GlcNAc...) asparagine glycosylation sites follow: Asn-510, Asn-538, and Asn-676. The interval 655–677 (VDSLLKSFDQTQTWYIFALRPND) is actin-binding. Residues 798–817 (DPFSPHRYQPTSFDSQDHVY) are disordered. A glycan (N-linked (GlcNAc...) asparagine) is linked at Asn-842. 2 helical membrane-spanning segments follow: residues 912–932 (WVWL…SKIA) and 951–971 (MIIW…GPVI). Residues Asn-1062, Asn-1078, and Asn-1146 are each glycosylated (N-linked (GlcNAc...) asparagine). Residues 1220 to 1240 (ILLALSCVMVAVIGFKFLSAL) traverse the membrane as a helical segment. Asn-1583 carries N-linked (GlcNAc...) asparagine glycosylation. 3 helical membrane passes run 1615–1635 (LSTI…YLIV), 1641–1661 (IPTL…MIFI), and 1668–1688 (MIAW…LLPL). Residues 1826-1847 (AHRPSLDDTSSFHQPYQPAPRP) are disordered. Residues 1875 to 1930 (AITDSQLERSIRKICANAELDKLTKKGVRKELEREYGVELTERREAINRLVEKVLT) form the DEK-C domain.

This sequence in the N-terminal section; belongs to the TRAFAC class CC myosin-kinesin ATPase superfamily. Myosin family. The protein in the C-terminal section; belongs to the chitin synthase family. Class V subfamily.

It is found in the cell membrane. The protein localises to the cell septum. The protein resides in the cell tip. It catalyses the reaction [(1-&gt;4)-N-acetyl-beta-D-glucosaminyl](n) + UDP-N-acetyl-alpha-D-glucosamine = [(1-&gt;4)-N-acetyl-beta-D-glucosaminyl](n+1) + UDP + H(+). In terms of biological role, polymerizes chitin, a structural polymer of the cell wall and septum, by transferring the sugar moiety of UDP-GlcNAc to the non-reducing end of the growing chitin polymer. Produces a large proportion of the chitin that is not deacetylated to chitosan. This is Chitin synthase 5 from Cryptococcus neoformans var. grubii serotype A (strain H99 / ATCC 208821 / CBS 10515 / FGSC 9487) (Filobasidiella neoformans var. grubii).